The chain runs to 235 residues: MEKLEMLYEGKAKKIYATDKADEVIVYYKDDATAFNGEKKGQIEDKGIMNNAITSVLFEILEKAGVKTHFIEKLNDREQLCKKVEIVPLEVIVRNVAAGSMAKRLGLEEGFKLKTTVFELSYKDDSLGDPLINDYHAVGIGATTFEELKVIYDMTAKINDTLKAVFKEQNINLIDFKVEFGRCADGTIVLADEISPDTCRFWDATTGEKLDKDRFRRDLGNVKDAYVEILKRISK.

It belongs to the SAICAR synthetase family.

It catalyses the reaction 5-amino-1-(5-phospho-D-ribosyl)imidazole-4-carboxylate + L-aspartate + ATP = (2S)-2-[5-amino-1-(5-phospho-beta-D-ribosyl)imidazole-4-carboxamido]succinate + ADP + phosphate + 2 H(+). The protein operates within purine metabolism; IMP biosynthesis via de novo pathway; 5-amino-1-(5-phospho-D-ribosyl)imidazole-4-carboxamide from 5-amino-1-(5-phospho-D-ribosyl)imidazole-4-carboxylate: step 1/2. The sequence is that of Phosphoribosylaminoimidazole-succinocarboxamide synthase from Clostridium beijerinckii (strain ATCC 51743 / NCIMB 8052) (Clostridium acetobutylicum).